Consider the following 358-residue polypeptide: CRS2-associated factor 2, mitochondrial (358 aa).

The transit peptide at 1-28 (MLSIRRSLTLAKEPKDLFLFLCNLRARC) directs the protein to the mitochondrion. Positions 35–64 (DPPFSPLSKPTKPPKEKKKQKTKKQDQSSE) are disordered. CRM domains follow at residues 141 to 239 (ETLT…SRPI) and 261 to 357 (DGLE…ELVT).

Part of large ribonucleo-protein complexes that include group IIB introns.

The protein localises to the mitochondrion. Its function is as follows. May be involved in the splicing of group IIB introns in mitochondria. This is CRS2-associated factor 2, mitochondrial from Arabidopsis thaliana (Mouse-ear cress).